A 308-amino-acid polypeptide reads, in one-letter code: Probable 5-dehydro-4-deoxyglucarate dehydratase (308 aa).

This sequence belongs to the DapA family.

It carries out the reaction 5-dehydro-4-deoxy-D-glucarate + H(+) = 2,5-dioxopentanoate + CO2 + H2O. It functions in the pathway carbohydrate acid metabolism; D-glucarate degradation; 2,5-dioxopentanoate from D-glucarate: step 2/2. This chain is Probable 5-dehydro-4-deoxyglucarate dehydratase (ycbC), found in Bacillus subtilis (strain 168).